The sequence spans 100 residues: Urease subunit gamma (100 aa).

The protein belongs to the urease gamma subunit family. In terms of assembly, heterotrimer of UreA (gamma), UreB (beta) and UreC (alpha) subunits. Three heterotrimers associate to form the active enzyme.

The protein resides in the cytoplasm. The catalysed reaction is urea + 2 H2O + H(+) = hydrogencarbonate + 2 NH4(+). It participates in nitrogen metabolism; urea degradation; CO(2) and NH(3) from urea (urease route): step 1/1. The polypeptide is Urease subunit gamma (Mycolicibacterium smegmatis (strain ATCC 700084 / mc(2)155) (Mycobacterium smegmatis)).